Consider the following 874-residue polypeptide: Protein translocase subunit SecA (874 aa).

ATP-binding positions include glutamine 87, glycine 105–threonine 109, and aspartate 512. Zn(2+)-binding residues include cysteine 859, cysteine 861, cysteine 870, and histidine 871.

The protein belongs to the SecA family. In terms of assembly, monomer and homodimer. Part of the essential Sec protein translocation apparatus which comprises SecA, SecYEG and auxiliary proteins SecDF-YajC and YidC. It depends on Zn(2+) as a cofactor.

It is found in the cell inner membrane. The protein localises to the cytoplasm. The catalysed reaction is ATP + H2O + cellular proteinSide 1 = ADP + phosphate + cellular proteinSide 2.. Part of the Sec protein translocase complex. Interacts with the SecYEG preprotein conducting channel. Has a central role in coupling the hydrolysis of ATP to the transfer of proteins into and across the cell membrane, serving both as a receptor for the preprotein-SecB complex and as an ATP-driven molecular motor driving the stepwise translocation of polypeptide chains across the membrane. The chain is Protein translocase subunit SecA from Buchnera aphidicola subsp. Schizaphis graminum (strain Sg).